We begin with the raw amino-acid sequence, 365 residues long: Peptide chain release factor 2 (365 aa).

At Gln-252 the chain carries N5-methylglutamine.

This sequence belongs to the prokaryotic/mitochondrial release factor family. Methylated by PrmC. Methylation increases the termination efficiency of RF2.

It localises to the cytoplasm. Functionally, peptide chain release factor 2 directs the termination of translation in response to the peptide chain termination codons UGA and UAA. The chain is Peptide chain release factor 2 from Colwellia psychrerythraea (strain 34H / ATCC BAA-681) (Vibrio psychroerythus).